The chain runs to 78 residues: MALSREVFYFGFALFFIVVELPSGSWAGLEYSQSFPGGEIAVCETCRLGRGKCRRTCIESEKIAGWCKLNFFCCRERI.

An N-terminal signal peptide occupies residues 1-27 (MALSREVFYFGFALFFIVVELPSGSWA). 3 cysteine pairs are disulfide-bonded: Cys46–Cys73, Cys53–Cys67, and Cys57–Cys74.

This sequence belongs to the beta-defensin family. As to expression, only expressed in epididymis (caput, corpus and cauda).

The protein localises to the secreted. Its function is as follows. Has antibacterial activity. This is Beta-defensin 12 (Defb12) from Mus musculus (Mouse).